A 69-amino-acid polypeptide reads, in one-letter code: DNA-directed RNA polymerase subunit epsilon (69 aa).

It belongs to the RNA polymerase subunit epsilon family. RNAP is composed of a core of 2 alpha, a beta and a beta' subunit. The core is associated with a delta subunit, and at least one of epsilon or omega. When a sigma factor is associated with the core the holoenzyme is formed, which can initiate transcription.

The catalysed reaction is RNA(n) + a ribonucleoside 5'-triphosphate = RNA(n+1) + diphosphate. Its function is as follows. A non-essential component of RNA polymerase (RNAP). The protein is DNA-directed RNA polymerase subunit epsilon of Geobacillus sp. (strain WCH70).